Consider the following 113-residue polypeptide: Small ribosomal subunit protein uS17 (113 aa).

It belongs to the universal ribosomal protein uS17 family. As to quaternary structure, part of the 30S ribosomal subunit.

Functionally, one of the primary rRNA binding proteins, it binds specifically to the 5'-end of 16S ribosomal RNA. In Nanoarchaeum equitans (strain Kin4-M), this protein is Small ribosomal subunit protein uS17.